The chain runs to 322 residues: Ferredoxin--NADP reductase (322 aa).

7 residues coordinate FAD: T12, E31, Q39, Y44, A86, F119, and T317.

The protein belongs to the ferredoxin--NADP reductase type 2 family. As to quaternary structure, homodimer. FAD serves as cofactor.

The enzyme catalyses 2 reduced [2Fe-2S]-[ferredoxin] + NADP(+) + H(+) = 2 oxidized [2Fe-2S]-[ferredoxin] + NADPH. This chain is Ferredoxin--NADP reductase, found in Acholeplasma laidlawii (strain PG-8A).